The sequence spans 147 residues: Large ribosomal subunit protein uL13 (147 aa).

The protein belongs to the universal ribosomal protein uL13 family. In terms of assembly, part of the 50S ribosomal subunit.

Functionally, this protein is one of the early assembly proteins of the 50S ribosomal subunit, although it is not seen to bind rRNA by itself. It is important during the early stages of 50S assembly. The polypeptide is Large ribosomal subunit protein uL13 (Lactobacillus johnsonii (strain CNCM I-12250 / La1 / NCC 533)).